Here is a 232-residue protein sequence, read N- to C-terminus: Somatolactin (232 aa).

Positions 1-16 (MHNWKGVWLCSLFLTF) are cleaved as a signal peptide. 3 disulfide bridges follow: C31/C41, C91/C206, and C223/C231. N147 carries an N-linked (GlcNAc...) asparagine glycan.

It belongs to the somatotropin/prolactin family. In terms of tissue distribution, pituitary gland.

The protein localises to the secreted. This is Somatolactin from Protopterus annectens (African lungfish).